A 173-amino-acid chain; its full sequence is Bifunctional protein PyrR (173 aa).

The PRPP-binding motif lies at 94–106 (VILIDDVLYTGRT).

Belongs to the purine/pyrimidine phosphoribosyltransferase family. PyrR subfamily. As to quaternary structure, homodimer and homohexamer; in equilibrium.

It carries out the reaction UMP + diphosphate = 5-phospho-alpha-D-ribose 1-diphosphate + uracil. Functionally, regulates transcriptional attenuation of the pyrimidine nucleotide (pyr) operon by binding in a uridine-dependent manner to specific sites on pyr mRNA. This disrupts an antiterminator hairpin in the RNA and favors formation of a downstream transcription terminator, leading to a reduced expression of downstream genes. Also displays a weak uracil phosphoribosyltransferase activity which is not physiologically significant. The polypeptide is Bifunctional protein PyrR (Streptococcus gordonii (strain Challis / ATCC 35105 / BCRC 15272 / CH1 / DL1 / V288)).